A 429-amino-acid polypeptide reads, in one-letter code: Enolase (429 aa).

Q162 serves as a coordination point for (2R)-2-phosphoglycerate. E204 acts as the Proton donor in catalysis. The Mg(2+) site is built by D241, E286, and D313. The (2R)-2-phosphoglycerate site is built by K338, R367, S368, and K389. The active-site Proton acceptor is K338.

This sequence belongs to the enolase family. Requires Mg(2+) as cofactor.

Its subcellular location is the cytoplasm. It is found in the secreted. The protein localises to the cell surface. It carries out the reaction (2R)-2-phosphoglycerate = phosphoenolpyruvate + H2O. It functions in the pathway carbohydrate degradation; glycolysis; pyruvate from D-glyceraldehyde 3-phosphate: step 4/5. Its function is as follows. Catalyzes the reversible conversion of 2-phosphoglycerate (2-PG) into phosphoenolpyruvate (PEP). It is essential for the degradation of carbohydrates via glycolysis. In Halalkalibacterium halodurans (strain ATCC BAA-125 / DSM 18197 / FERM 7344 / JCM 9153 / C-125) (Bacillus halodurans), this protein is Enolase.